The primary structure comprises 237 residues: Uridylate kinase (237 aa).

11-14 contacts ATP; it reads KLSG. Position 53 (glycine 53) interacts with UMP. ATP-binding residues include glycine 54 and arginine 58. Residues aspartate 73 and 134–141 contribute to the UMP site; that span reads TGNPFFTT. The ATP site is built by threonine 161, tyrosine 167, and aspartate 170.

The protein belongs to the UMP kinase family. As to quaternary structure, homohexamer.

It localises to the cytoplasm. The enzyme catalyses UMP + ATP = UDP + ADP. It participates in pyrimidine metabolism; CTP biosynthesis via de novo pathway; UDP from UMP (UMPK route): step 1/1. Inhibited by UTP. Its function is as follows. Catalyzes the reversible phosphorylation of UMP to UDP. The polypeptide is Uridylate kinase (Burkholderia lata (strain ATCC 17760 / DSM 23089 / LMG 22485 / NCIMB 9086 / R18194 / 383)).